The chain runs to 88 residues: Guanine nucleotide-binding protein subunit gamma (88 aa).

Cys84 is lipidated: S-palmitoyl cysteine. Cys85 is subject to Cysteine methyl ester. Cys85 carries S-farnesyl cysteine lipidation. A propeptide spans 86-88 (TIM) (removed in mature form).

The protein belongs to the G protein gamma family. In terms of assembly, g proteins are composed of 3 units, alpha, beta and gamma.

It is found in the membrane. This is Guanine nucleotide-binding protein subunit gamma from Candida glabrata (strain ATCC 2001 / BCRC 20586 / JCM 3761 / NBRC 0622 / NRRL Y-65 / CBS 138) (Yeast).